The primary structure comprises 1034 residues: Multidrug export protein AcrF (1034 aa).

Residues 1-9 (MANFFIRRP) lie on the Cytoplasmic side of the membrane. Residues 10–28 (IFAWVLAIILMMAGALAIL) form a helical membrane-spanning segment. Residues 29-339 (QLPVAQYPTI…TPFVQLSIHE (311 aa)) lie on the Periplasmic side of the membrane. Residues 340–359 (VVKTLFEAIMLVFLVMYLFL) form a helical membrane-spanning segment. At 360 to 365 (QNMRAT) the chain is on the cytoplasmic side. Residues 366–385 (LIPTIAVPVVLLGTFAILAA) form a helical membrane-spanning segment. The Periplasmic portion of the chain corresponds to 386-391 (FGYSIN). A helical transmembrane segment spans residues 392 to 413 (TLTMFGMVLAIGLLVDDAIVVV). At 414–441 (ENVERVMMEDKLPPKEATEKSMSQIQGA) the chain is on the cytoplasmic side. The helical transmembrane segment at 442–460 (LVGIAMVLSAVFIPMAFFG) threads the bilayer. Residues 461–473 (GSTGAIYRQFSIT) lie on the Periplasmic side of the membrane. Residues 474–496 (IVSAMALSVLVALILTPALCATL) traverse the membrane as a helical segment. The Cytoplasmic segment spans residues 497-537 (LKPVSAEHHENKGGFFGWFNTTFDHSVNHYTNSVGKILGST). A helical transmembrane segment spans residues 538–556 (GRYLLIYALIVAGMVVLFL). At 557-871 (RLPSSFLPEE…SYQERLSGNQ (315 aa)) the chain is on the periplasmic side. Residues 872–891 (APALVAISFVVVFLCLAALY) traverse the membrane as a helical segment. At 892–897 (ESWSIP) the chain is on the cytoplasmic side. The chain crosses the membrane as a helical span at residues 898-917 (VSVMLVVPLGIVGVLLAATL). The Periplasmic segment spans residues 918 to 923 (FNQKND). A helical transmembrane segment spans residues 924–945 (VYFMVGLLTTIGLSAKNAILIV). The Cytoplasmic portion of the chain corresponds to 946–973 (EFAKDLMEKEGKGVVEATLMAVRMRLRP). A helical transmembrane segment spans residues 974–992 (ILMTSLAFILGVLPLAISN). Residues 993 to 1005 (GAGSGAQNAVGIG) lie on the Periplasmic side of the membrane. The chain crosses the membrane as a helical span at residues 1006 to 1028 (VMGGMVSATLLAIFFVPVFFVVI). Residues 1029 to 1034 (RRCFKG) lie on the Cytoplasmic side of the membrane.

The protein belongs to the resistance-nodulation-cell division (RND) (TC 2.A.6) family. Part of the tripartite efflux system AcrEF-TolC, which is composed of an inner membrane transporter, AcrF, a periplasmic membrane fusion protein, AcrE, and an outer membrane component, TolC. The complex forms a large protein conduit and can translocate molecules across both the inner and outer membranes.

It is found in the cell inner membrane. Its function is as follows. Part of the tripartite efflux system AcrEF-TolC. Involved in the efflux of indole and organic solvents. This Escherichia coli (strain K12) protein is Multidrug export protein AcrF (acrF).